Reading from the N-terminus, the 158-residue chain is Endoribonuclease YbeY (158 aa).

Residues His118, His122, and His128 each contribute to the Zn(2+) site.

Belongs to the endoribonuclease YbeY family. Requires Zn(2+) as cofactor.

It is found in the cytoplasm. In terms of biological role, single strand-specific metallo-endoribonuclease involved in late-stage 70S ribosome quality control and in maturation of the 3' terminus of the 16S rRNA. In Bartonella henselae (strain ATCC 49882 / DSM 28221 / CCUG 30454 / Houston 1) (Rochalimaea henselae), this protein is Endoribonuclease YbeY.